A 310-amino-acid polypeptide reads, in one-letter code: Deoxyribonuclease gamma (310 aa).

The first 25 residues, 1–25 (MSLYPASPYLASLLLFILALHGALS), serve as a signal peptide directing secretion. Positions 40–56 (KKENHNAMDIIVKIIKR) match the Bipartite nuclear localization signal motif. Catalysis depends on residues E105 and H160. Cysteines 199 and 236 form a disulfide. A not required for free DNA-nuclease activity but required for activity towards liposome-coated DNA region spans residues 289 to 310 (SRAFTNSRKSVSLKKKKKGSRS). The Nuclear localization signal signature appears at 301–307 (LKKKKKG).

It belongs to the DNase I family. In terms of assembly, monomer. It depends on Ca(2+) as a cofactor. The cofactor is Mg(2+). Post-translationally, seems to be synthesized as an inactive precursor protein and converted into an active mature enzyme by removal of the N-terminal precursor peptide during apoptosis. Poly-ADP-ribosylated by PARP1. ADP-ribosylation negatively regulates enzymatic activity during apoptosis. Detected at high levels in spleen, lymph nodes, thymus and liver. Observed also in kidney and testis, but not in brain or heart.

It localises to the nucleus. It is found in the secreted. With respect to regulation, inhibited by zinc. Its function is as follows. Has DNA hydrolytic activity. Is capable of both single- and double-stranded DNA cleavage, producing DNA fragments with 3'-OH ends. Can cleave chromatin to nucleosomal units and cleaves nucleosomal and liposome-coated DNA. Acts in internucleosomal DNA fragmentation (INDF) during apoptosis and necrosis. The role in apoptosis includes myogenic and neuronal differentiation, and BCR-mediated clonal deletion of self-reactive B cells. Is active on chromatin in apoptotic cell-derived membrane-coated microparticles and thus suppresses anti-DNA autoimmunity. Together with DNASE1, plays a key role in degrading neutrophil extracellular traps (NETs). NETs are mainly composed of DNA fibers and are released by neutrophils to bind pathogens during inflammation. Degradation of intravascular NETs by DNASE1 and DNASE1L3 is required to prevent formation of clots that obstruct blood vessels and cause organ damage following inflammation. In Rattus norvegicus (Rat), this protein is Deoxyribonuclease gamma (Dnase1l3).